Consider the following 95-residue polypeptide: Co-chaperonin GroES (95 aa).

Belongs to the GroES chaperonin family. Heptamer of 7 subunits arranged in a ring. Interacts with the chaperonin GroEL.

The protein resides in the cytoplasm. Functionally, together with the chaperonin GroEL, plays an essential role in assisting protein folding. The GroEL-GroES system forms a nano-cage that allows encapsulation of the non-native substrate proteins and provides a physical environment optimized to promote and accelerate protein folding. GroES binds to the apical surface of the GroEL ring, thereby capping the opening of the GroEL channel. This Chlorobium phaeobacteroides (strain BS1) protein is Co-chaperonin GroES.